A 315-amino-acid chain; its full sequence is Type II methyltransferase M.Bsp6I (315 aa).

The SAM-dependent MTase C5-type domain occupies 2–315 (LQIASLFAGV…IAENIYKSML (314 aa)). C73 is an active-site residue.

The protein belongs to the class I-like SAM-binding methyltransferase superfamily. C5-methyltransferase family.

The enzyme catalyses a 2'-deoxycytidine in DNA + S-adenosyl-L-methionine = a 5-methyl-2'-deoxycytidine in DNA + S-adenosyl-L-homocysteine + H(+). In terms of biological role, a methylase that recognizes the double-stranded sequence 5'-GCNGC-3', methylates C-? on both strands, and protects the DNA from cleavage by the Bsp6I endonuclease. In Bacillus sp. (strain RFL6), this protein is Type II methyltransferase M.Bsp6I.